Consider the following 1048-residue polypeptide: Probable inactive receptor kinase At5g10020 (1048 aa).

A signal peptide spans 1-21 (MSHFLTFCFLSLLLLLHGANA). LRR repeat units lie at residues 100–120 (RLRN…PSLG), 124–146 (SLQH…ISEL), 148–169 (SLNH…GFRN), 172–194 (QLRS…FTEL), 196–217 (NVEF…PMEN), 224–246 (TLRH…ESIG), 250–272 (NLEI…GSQP), 273–294 (SLRI…ELLQ), 298–319 (PLLE…INSS), 320–342 (TLTM…FKSC), 365–387 (TPDV…TSAF), 389–411 (RLSV…WGDS), 412–433 (QFSV…SFFT), 436–457 (SLRS…RGSR), 469–491 (QMEL…IGTM), 493–516 (KIKV…NKLS), 517–539 (GLLF…LPSQ), and 540–560 (MVGF…DLRS). The helical transmembrane segment at 602 to 622 (IAIIVASVGAAIMILFVLFAY) threads the bilayer. Residues 696–733 (EQGAPATSAPTNLLDDYPAASGRKSSSGGSPLSSSPRF) are disordered. Residues 716–733 (SGRKSSSGGSPLSSSPRF) show a composition bias toward low complexity. A Phosphoserine modification is found at Ser-744. Residues 768 to 1045 (RAPAEVLGRS…IRQVLDHLTS (278 aa)) form the Protein kinase domain. ATP-binding positions include 774–782 (LGRSSHGTL) and Lys-796.

This sequence belongs to the protein kinase superfamily.

The protein resides in the membrane. The protein is Probable inactive receptor kinase At5g10020 of Arabidopsis thaliana (Mouse-ear cress).